The sequence spans 306 residues: Probable cobalamin biosynthesis protein CobD (306 aa).

Helical transmembrane passes span 54–74 (LFGF…AFEI), 88–108 (ISLY…IEFS), 155–175 (ITDS…PGAF), 207–227 (ILNF…APFY), and 286–306 (SLKA…ILFM).

Belongs to the CobD/CbiB family.

Its subcellular location is the cell membrane. The protein operates within cofactor biosynthesis; adenosylcobalamin biosynthesis. Converts cobyric acid to cobinamide by the addition of aminopropanol on the F carboxylic group. In Methanococcus maripaludis (strain DSM 14266 / JCM 13030 / NBRC 101832 / S2 / LL), this protein is Probable cobalamin biosynthesis protein CobD.